The primary structure comprises 239 residues: Large ribosomal subunit protein uL1 (239 aa).

Belongs to the universal ribosomal protein uL1 family. Part of the 50S ribosomal subunit.

Functionally, binds directly to 23S rRNA. The L1 stalk is quite mobile in the ribosome, and is involved in E site tRNA release. Protein L1 is also a translational repressor protein, it controls the translation of the L11 operon by binding to its mRNA. The chain is Large ribosomal subunit protein uL1 from Rhodococcus erythropolis (strain PR4 / NBRC 100887).